We begin with the raw amino-acid sequence, 177 residues long: MNGGHIQLMIGPMFSGKSTELIRRVRRYQIAQYKCVTIKYSNDNRYGTGLWTHDKNNFEALEATKLCDVLESITDFSVIGIDEGQFFPDIVEFCERMANEGKIVIVAALDGTFQRKPFNNILNLIPLSEMVVKLTAVCMKCFKEASFSKRLGEETEIEIIGGNDMYQSVCRKCYIDS.

11–18 provides a ligand contact to ATP; it reads GPMFSGKS. Glu83 acts as the Proton acceptor in catalysis. Phe113 is a binding site for substrate. Zn(2+) is bound by residues Cys138 and Cys141. Position 157-161 (157-161) interacts with substrate; the sequence is IEIIG. Residues Cys170 and Cys173 each coordinate Zn(2+).

The protein belongs to the thymidine kinase family. In terms of assembly, homotetramer. Two molecules of substrate bind to each enzyme tetramer.

It catalyses the reaction thymidine + ATP = dTMP + ADP + H(+). Its function is as follows. Phosphorylates thymidine and thymidine analogs, such as azidothymidine (AZT). Part of the salvage pathway for pyrimidine deoxyribonucleotide synthesis. The polypeptide is Thymidine kinase (OPG101) (Vaccinia virus (strain Tian Tan) (VACV)).